The chain runs to 556 residues: Calcium-dependent protein kinase 5 (556 aa).

The disordered stretch occupies residues 1–40; it reads MGNSCRGSFKDKLDEGDNNKPEDYSKTSTTNLSSNSDHSP. G2 is lipidated: N-myristoyl glycine. Residues 8 to 25 show a composition bias toward basic and acidic residues; that stretch reads SFKDKLDEGDNNKPEDYS. Residues 26-39 are compositionally biased toward low complexity; it reads KTSTTNLSSNSDHS. Residues 97-355 form the Protein kinase domain; it reads YTLSRKLGQG…AHEVLRHPWI (259 aa). ATP is bound by residues 103 to 111 and K126; that span reads LGQGQFGTT. D221 functions as the Proton acceptor in the catalytic mechanism. At S261 the chain carries Phosphoserine. Residues 361–391 form an autoinhibitory domain region; that stretch reads APDRALDPAVLSRLKQFSAMNKLKKMALKVI. 4 consecutive EF-hand domains span residues 398 to 433, 434 to 469, 470 to 505, and 509 to 539; these read EEIA…YGST, LKDT…LNKL, EREE…HGMA, and LEDI…GNAG. Positions 411, 413, 415, 422, 447, 449, 451, 453, 458, 483, 485, 487, 494, 517, 519, 521, 523, and 528 each coordinate Ca(2+).

It belongs to the protein kinase superfamily. Ser/Thr protein kinase family. CDPK subfamily.

Its subcellular location is the membrane. It carries out the reaction L-seryl-[protein] + ATP = O-phospho-L-seryl-[protein] + ADP + H(+). The catalysed reaction is L-threonyl-[protein] + ATP = O-phospho-L-threonyl-[protein] + ADP + H(+). With respect to regulation, activated by calcium. Autophosphorylation may play an important role in the regulation of the kinase activity. In terms of biological role, may play a role in signal transduction pathways that involve calcium as a second messenger. In Arabidopsis thaliana (Mouse-ear cress), this protein is Calcium-dependent protein kinase 5 (CPK5).